The primary structure comprises 382 residues: Guanine nucleotide exchange factor for Rab-3A (382 aa).

Pro residues predominate over residues 1 to 17 (MWSGPPQPDQGLPPPLA). The interval 1 to 60 (MWSGPPQPDQGLPPPLAAVPVPWKSTDPCQGHRESPGALVETSAGEEAQGQEGPAAAQLD) is disordered. Positions 45 to 58 (GEEAQGQEGPAAAQ) are enriched in low complexity. Residues 73 to 161 (EKGSEFLKEE…AEVTALKTLV (89 aa)) are a coiled coil. The disordered stretch occupies residues 166–198 (PASPNRELHPQLLSPTKAGPRKGHSRHKSTSST). A phosphoserine mark is found at serine 168 and serine 179. A compositionally biased stretch (basic residues) spans 184–194 (GPRKGHSRHKS).

Belongs to the SEC2 family. Interacts with RAB3A and IHPK1 through the coiled-coil domain. This interaction is competitive. IHPK1 kinase activity is not required for this interaction.

Guanine nucleotide exchange factor (GEF) which may activate RAB3A, a GTPase that regulates synaptic vesicle exocytosis. Promotes the exchange of GDP to GTP, converting inactive GDP-bound Rab proteins into their active GTP-bound form. May also activate RAB8A and RAB8B. In Homo sapiens (Human), this protein is Guanine nucleotide exchange factor for Rab-3A (RAB3IL1).